Here is a 237-residue protein sequence, read N- to C-terminus: Protein ULTRAPETALA 1 (237 aa).

The 99-residue stretch at 18-116 folds into the SAND domain; it reads EELQEMSGVN…SKTVLLKYYN (99 aa). The CW-type zinc finger occupies 133 to 191; that stretch reads VCHRDEFVGCNDCGKERRFRLRSRDECRLHHNAMGDPNWKCSDFPYDKITCEEEEERGS.

As to quaternary structure, interacts with HHO5. Associates with ATX1 for trimethylating 'Lys-4' on histone H3 (H3K4me3) at flower MADS box gene loci. In terms of tissue distribution, expressed at low levels in seedlings, roots, shoots, leaves, stems, inflorescences, pollen, flowers and siliques, with highest levels dividing tissues including inflorescence.

The protein resides in the cytoplasm. The protein localises to the nucleus. Functionally, putative transcription factor that acts as a key negative regulator of cell accumulation in shoot and floral meristems. Negatively regulates the size of the WUSCHEL (WUS)-expressing organizing center in inflorescence meristems. May act by down-regulating expression of WUS. Acts as an antirepressor that counteracts EMF1 action through modulation of trimethylated 'Lys-4' on histone H3 (H3K4me3) marks on target gene loci (including genes involved in salt stress response and flower development). Collaboratively with RBL and CYP40/SQN, influences floral meristem (FM) determinacy in an AGAMOUS and SUPERMAN-dependent manner, thus contributing to the floral developmental homeostasis. In Arabidopsis thaliana (Mouse-ear cress), this protein is Protein ULTRAPETALA 1.